The sequence spans 296 residues: Small ribosomal subunit protein uS2 (296 aa).

The segment at 246-272 is disordered; sequence QAKDGSVVDSGKGKSIAAHKGGGKASK.

It belongs to the universal ribosomal protein uS2 family.

The sequence is that of Small ribosomal subunit protein uS2 from Anaplasma phagocytophilum (strain HZ).